Consider the following 119-residue polypeptide: Large ribosomal subunit protein bL20 (119 aa).

It belongs to the bacterial ribosomal protein bL20 family.

Functionally, binds directly to 23S ribosomal RNA and is necessary for the in vitro assembly process of the 50S ribosomal subunit. It is not involved in the protein synthesizing functions of that subunit. This chain is Large ribosomal subunit protein bL20, found in Bradyrhizobium sp. (strain BTAi1 / ATCC BAA-1182).